Reading from the N-terminus, the 469-residue chain is tRNA-2-methylthio-N(6)-dimethylallyladenosine synthase (469 aa).

The 116-residue stretch at 27–142 (KKVYIRTFGC…LPQMLAQRAR (116 aa)) folds into the MTTase N-terminal domain. Residues cysteine 36, cysteine 73, cysteine 105, cysteine 179, cysteine 183, and cysteine 186 each contribute to the [4Fe-4S] cluster site. Positions 165–398 (KVDGAAAFVS…QATIEDNVRR (234 aa)) constitute a Radical SAM core domain. The region spanning 401–467 (ERRVGTVQRV…PHSLRGEPVL (67 aa)) is the TRAM domain.

This sequence belongs to the methylthiotransferase family. MiaB subfamily. In terms of assembly, monomer. [4Fe-4S] cluster serves as cofactor.

Its subcellular location is the cytoplasm. It catalyses the reaction N(6)-dimethylallyladenosine(37) in tRNA + (sulfur carrier)-SH + AH2 + 2 S-adenosyl-L-methionine = 2-methylsulfanyl-N(6)-dimethylallyladenosine(37) in tRNA + (sulfur carrier)-H + 5'-deoxyadenosine + L-methionine + A + S-adenosyl-L-homocysteine + 2 H(+). Its function is as follows. Catalyzes the methylthiolation of N6-(dimethylallyl)adenosine (i(6)A), leading to the formation of 2-methylthio-N6-(dimethylallyl)adenosine (ms(2)i(6)A) at position 37 in tRNAs that read codons beginning with uridine. This Leptothrix cholodnii (strain ATCC 51168 / LMG 8142 / SP-6) (Leptothrix discophora (strain SP-6)) protein is tRNA-2-methylthio-N(6)-dimethylallyladenosine synthase.